Consider the following 1103-residue polypeptide: Voltage-dependent calcium channel subunit alpha-2/delta-1 (1103 aa).

The N-terminal stretch at 1-24 is a signal peptide; that stretch reads MAAGCLLALTLTLFQSGLIGPSSE. Residues 25-1073 lie on the Extracellular side of the membrane; the sequence is EPFPSPVTIK…VLEDYTDCGG (1049 aa). The N-linked (GlcNAc...) asparagine glycan is linked to Asn-92. Ser-119 is modified (phosphoserine). N-linked (GlcNAc...) asparagine glycans are attached at residues Asn-136 and Asn-184. One can recognise a VWFA domain in the interval 253 to 430; sequence DMLILVDVSG…INTQEYLDVL (178 aa). A divalent metal cation is bound by residues Asp-259, Ser-261, and Ser-263. The short motif at 259–263 is the MIDAS-like motif element; the sequence is DVSGS. N-linked (GlcNAc...) asparagine glycosylation is found at Asn-324 and Asn-348. Cys-404 and Cys-1059 are joined by a disulfide. A Cache domain is found at 446–537; that stretch reads WTNVYLDALE…QPKPIGVGIP (92 aa). Residues Asn-613, Asn-781, and Asn-888 are each glycosylated (N-linked (GlcNAc...) asparagine). The helical transmembrane segment at 1074 to 1094 threads the bilayer; it reads VSGLNPSLWSIFGLQFILLWL. Residues 1095–1103 lie on the Cytoplasmic side of the membrane; the sequence is VSGSRHYLL.

The protein belongs to the calcium channel subunit alpha-2/delta family. Dimer formed of alpha-2-1 and delta-1 chains; disulfide-linked. Voltage-dependent calcium channels are multisubunit complexes, consisting of alpha-1 (CACNA1), alpha-2 (CACNA2D), beta (CACNB) and delta (CACNA2D) subunits in a 1:1:1:1 ratio. Proteolytically processed into subunits alpha-2-1 and delta-1 that are disulfide-linked. In terms of tissue distribution, isoform 2A is expressed in skeletal muscle and aorta. Isoform 2B is expressed in brain. Isoform 2C is expressed in heart. Isoform 2D is expressed in heart and smooth muscle. Isoform 2E is expressed in smooth muscle. All five isoforms are expressed in the cardiovascular system.

Its subcellular location is the membrane. It localises to the cell membrane. Functionally, the alpha-2/delta subunit of voltage-dependent calcium channels regulates calcium current density and activation/inactivation kinetics of the calcium channel. Plays an important role in excitation-contraction coupling. This Mus musculus (Mouse) protein is Voltage-dependent calcium channel subunit alpha-2/delta-1 (Cacna2d1).